The following is a 304-amino-acid chain: Acetylglutamate kinase (304 aa).

Substrate is bound by residues 74–75 (GG), R96, and N201.

Belongs to the acetylglutamate kinase family. ArgB subfamily.

Its subcellular location is the cytoplasm. The enzyme catalyses N-acetyl-L-glutamate + ATP = N-acetyl-L-glutamyl 5-phosphate + ADP. It participates in amino-acid biosynthesis; L-arginine biosynthesis; N(2)-acetyl-L-ornithine from L-glutamate: step 2/4. In terms of biological role, catalyzes the ATP-dependent phosphorylation of N-acetyl-L-glutamate. The chain is Acetylglutamate kinase from Alkalilimnicola ehrlichii (strain ATCC BAA-1101 / DSM 17681 / MLHE-1).